A 65-amino-acid chain; its full sequence is Conotoxin TsMRCL-04 (65 aa).

An N-terminal signal peptide occupies residues 1 to 20 (MRCLPVFIILLLLIPSAASA). A propeptide spanning residues 21 to 48 (AQPETKDDAALASFYDNAKRTLQRHWAK) is cleaved from the precursor. Glutamate 63 carries the glutamic acid 1-amide modification.

It belongs to the conotoxin T superfamily. Contains 2 disulfide bonds that can be either 'C1-C3, C2-C4' or 'C1-C4, C2-C3', since these disulfide connectivities have been observed for conotoxins with cysteine framework V (for examples, see AC P0DQQ7 and AC P81755). In terms of tissue distribution, expressed by the venom duct.

Its subcellular location is the secreted. In Conus tessulatus (Tessellate cone), this protein is Conotoxin TsMRCL-04.